Consider the following 170-residue polypeptide: Protein ripply3 (170 aa).

The WRPW motif motif lies at 40 to 43 (WRPW). The tract at residues 79–114 (HPVRLYMPKSKTSEYLQHMGKKVLANFPVQATIHFY) is ripply homology domain. Positions 143–152 (VNSSRGSGDN) are enriched in polar residues. The disordered stretch occupies residues 143-170 (VNSSRGSGDNYSVPGGPKRNISSHTGSA).

The protein belongs to the ripply family. Interacts with tbx1 and tle4/grg4.

The protein resides in the nucleus. In terms of biological role, acts as a transcriptional corepressor. Negative regulator of the transcriptional activity of tbx1 that plays a key role in pharyngeal development. Plays a role in the formation of the anteroposterior (AP) axis during embryonic development; required to establish the posterolateral border of the pre-placodal ectoderm (PPE) acting downstream of the retinoic acid receptor (RAR) signaling. The polypeptide is Protein ripply3 (Xenopus tropicalis (Western clawed frog)).